We begin with the raw amino-acid sequence, 615 residues long: DNA mismatch repair protein MutL (615 aa).

Residues 363–397 (FAEPAAREPVAPRYTPAPASGSRPAAPWPNAQPGY) are disordered. The span at 364–391 (AEPAAREPVAPRYTPAPASGSRPAAPWP) shows a compositional bias: low complexity.

Belongs to the DNA mismatch repair MutL/HexB family.

In terms of biological role, this protein is involved in the repair of mismatches in DNA. It is required for dam-dependent methyl-directed DNA mismatch repair. May act as a 'molecular matchmaker', a protein that promotes the formation of a stable complex between two or more DNA-binding proteins in an ATP-dependent manner without itself being part of a final effector complex. The polypeptide is DNA mismatch repair protein MutL (Escherichia coli (strain ATCC 8739 / DSM 1576 / NBRC 3972 / NCIMB 8545 / WDCM 00012 / Crooks)).